Consider the following 29-residue polypeptide: Toxin Bcg III 15.67 (29 aa).

In terms of domain architecture, EGF-like spans 2 to 29; the sequence is QGTACTGEHAHSFCLNGGTCRHIQQLGE. Cysteines 6 and 21 form a disulfide.

The protein resides in the secreted. The protein localises to the nematocyst. Has both toxic and EGF activity. In Bunodosoma cangicum (Sea anemone), this protein is Toxin Bcg III 15.67.